The primary structure comprises 660 residues: ATP-dependent RNA helicase DDX18 (660 aa).

Residues 16-153 are disordered; the sequence is RNAKLRQRNL…DVKKADDSEV (138 aa). Residues 25–40 are compositionally biased toward polar residues; sequence LKLQETSDTSLSQPQN. Residues 124-133 show a composition bias toward basic and acidic residues; it reads PDTKKAKTEE. Positions 134–143 are enriched in acidic residues; sequence SAEACEEPED. A Q motif motif is present at residues 169-197; the sequence is FASLSNLVNENTLKAIEEMGFKRMTEIQH. The Helicase ATP-binding domain occupies 200-375; sequence IRPLLEGRDL…RISLKKEPLY (176 aa). 213–220 is an ATP binding site; the sequence is AKTGSGKT. The short motif at 323 to 326 is the DEAD box element; it reads DEAD. The Helicase C-terminal domain maps to 389-559; it reads GLEQGYVVCP…DIQSQLEKLI (171 aa).

Belongs to the DEAD box helicase family. DDX18/HAS1 subfamily. As to quaternary structure, interacts with NOL8; the interaction is RNA-dependent. Interacts with PRC2 complex components EZH2, SUZ2 and JARID2; these interactions prevent deposition of the repressive H3K27me3 mark onto rDNA in pluripotent cells.

Its subcellular location is the nucleus. The protein resides in the nucleolus. The protein localises to the chromosome. It carries out the reaction ATP + H2O = ADP + phosphate + H(+). Its function is as follows. ATP-dependent RNA helicase that plays a role in the regulation of R-loop homeostasis in both endogenous R-loop-prone regions and at sites of DNA damage. At endogenous loci such as actively transcribed genes, may act as a helicase to resolve the formation of R-loop during transcription and prevent the interference of R-loop with DNA-replication machinery. Also participates in the removal of DNA-lesion-associated R-loop. Plays an essential role for establishing pluripotency during embryogenesis and for pluripotency maintenance in embryonic stem cells. Mechanistically, prevents the polycomb repressive complex 2 (PRC2) from accessing rDNA loci and protects the active chromatin status in nucleolus. The chain is ATP-dependent RNA helicase DDX18 (Ddx18) from Mus musculus (Mouse).